Reading from the N-terminus, the 292-residue chain is tRNA-splicing endonuclease (292 aa).

Catalysis depends on residues Y231, H238, and K267.

The protein belongs to the tRNA-intron endonuclease family. Archaeal long subfamily. In terms of assembly, homodimer.

The catalysed reaction is pretRNA = a 3'-half-tRNA molecule with a 5'-OH end + a 5'-half-tRNA molecule with a 2',3'-cyclic phosphate end + an intron with a 2',3'-cyclic phosphate and a 5'-hydroxyl terminus.. In terms of biological role, endonuclease that removes tRNA introns. Cleaves pre-tRNA at the 5'- and 3'-splice sites to release the intron. The products are an intron and two tRNA half-molecules bearing 2',3' cyclic phosphate and 5'-OH termini. Recognizes a pseudosymmetric substrate in which 2 bulged loops of 3 bases are separated by a stem of 4 bp. In Thermoplasma volcanium (strain ATCC 51530 / DSM 4299 / JCM 9571 / NBRC 15438 / GSS1), this protein is tRNA-splicing endonuclease.